The sequence spans 783 residues: Endonuclease MutS2 (783 aa).

Position 337 to 344 (337 to 344) interacts with ATP; that stretch reads GPNTGGKT. Residues 708-783 form the Smr domain; sequence LHLRGYRYEE…GFGVTVAELK (76 aa).

The protein belongs to the DNA mismatch repair MutS family. MutS2 subfamily. In terms of assembly, homodimer. Binds to stalled ribosomes, contacting rRNA.

In terms of biological role, endonuclease that is involved in the suppression of homologous recombination and thus may have a key role in the control of bacterial genetic diversity. Acts as a ribosome collision sensor, splitting the ribosome into its 2 subunits. Detects stalled/collided 70S ribosomes which it binds and splits by an ATP-hydrolysis driven conformational change. Acts upstream of the ribosome quality control system (RQC), a ribosome-associated complex that mediates the extraction of incompletely synthesized nascent chains from stalled ribosomes and their subsequent degradation. Probably generates substrates for RQC. The polypeptide is Endonuclease MutS2 (Staphylococcus haemolyticus (strain JCSC1435)).